A 116-amino-acid chain; its full sequence is Phage-like element PBSX protein XkdD (116 aa).

The sequence is that of Phage-like element PBSX protein XkdD (xkdD) from Bacillus subtilis (strain 168).